The following is a 740-amino-acid chain: Phosphoribosylformylglycinamidine synthase subunit PurL (740 aa).

His-50 is a catalytic residue. ATP contacts are provided by Tyr-53 and Lys-92. Residue Glu-94 coordinates Mg(2+). Substrate-binding positions include 95-98 and Arg-117; that span reads SHNH. His-96 (proton acceptor) is an active-site residue. Position 118 (Asp-118) interacts with Mg(2+). Gln-241 serves as a coordination point for substrate. Mg(2+) is bound at residue Asp-269. Residue 313 to 315 participates in substrate binding; sequence ESQ. Residues Asp-495 and Gly-532 each coordinate ATP. A Mg(2+)-binding site is contributed by Asn-533. Ser-535 is a substrate binding site.

Belongs to the FGAMS family. In terms of assembly, monomer. Part of the FGAM synthase complex composed of 1 PurL, 1 PurQ and 2 PurS subunits.

The protein localises to the cytoplasm. It catalyses the reaction N(2)-formyl-N(1)-(5-phospho-beta-D-ribosyl)glycinamide + L-glutamine + ATP + H2O = 2-formamido-N(1)-(5-O-phospho-beta-D-ribosyl)acetamidine + L-glutamate + ADP + phosphate + H(+). It functions in the pathway purine metabolism; IMP biosynthesis via de novo pathway; 5-amino-1-(5-phospho-D-ribosyl)imidazole from N(2)-formyl-N(1)-(5-phospho-D-ribosyl)glycinamide: step 1/2. Functionally, part of the phosphoribosylformylglycinamidine synthase complex involved in the purines biosynthetic pathway. Catalyzes the ATP-dependent conversion of formylglycinamide ribonucleotide (FGAR) and glutamine to yield formylglycinamidine ribonucleotide (FGAM) and glutamate. The FGAM synthase complex is composed of three subunits. PurQ produces an ammonia molecule by converting glutamine to glutamate. PurL transfers the ammonia molecule to FGAR to form FGAM in an ATP-dependent manner. PurS interacts with PurQ and PurL and is thought to assist in the transfer of the ammonia molecule from PurQ to PurL. The polypeptide is Phosphoribosylformylglycinamidine synthase subunit PurL (Brucella abortus (strain S19)).